A 312-amino-acid chain; its full sequence is Protein-methionine-sulfoxide reductase catalytic subunit MsrP (312 aa).

Residues 1-47 constitute a signal peptide (tat-type signal); that stretch reads MLIRRPPDLLPSEITPEPLARGRRALLKGLGAGAALAGLGLPQISQA. Mo-molybdopterin contacts are provided by residues Asn-74, 77–78, Cys-133, Thr-168, Asn-216, Arg-221, and 232–234; these read YE and SAK.

It belongs to the MsrP family. In terms of assembly, heterodimer of a catalytic subunit (MsrP) and a heme-binding subunit (MsrQ). Mo-molybdopterin serves as cofactor. In terms of processing, predicted to be exported by the Tat system. The position of the signal peptide cleavage has not been experimentally proven.

The protein resides in the periplasm. It catalyses the reaction L-methionyl-[protein] + a quinone + H2O = L-methionyl-(R)-S-oxide-[protein] + a quinol. In terms of biological role, part of the MsrPQ system that repairs oxidized periplasmic proteins containing methionine sulfoxide residues (Met-O), using respiratory chain electrons. Thus protects these proteins from oxidative-stress damage caused by reactive species of oxygen and chlorine generated by the host defense mechanisms. MsrPQ is essential for the maintenance of envelope integrity under bleach stress, rescuing a wide series of structurally unrelated periplasmic proteins from methionine oxidation. The catalytic subunit MsrP is non-stereospecific, being able to reduce both (R-) and (S-) diastereoisomers of methionine sulfoxide. Involved in protection against reactive chlorine species (RCS) generated by chlorite and hypochlorite. This chain is Protein-methionine-sulfoxide reductase catalytic subunit MsrP, found in Azospira oryzae (strain ATCC BAA-33 / DSM 13638 / PS) (Dechlorosoma suillum).